The primary structure comprises 360 residues: Phosphoserine aminotransferase (360 aa).

Residue Arg41 coordinates L-glutamate. Positions 101, 152, 172, and 195 each coordinate pyridoxal 5'-phosphate. Lys196 is subject to N6-(pyridoxal phosphate)lysine. Residue 237 to 238 (NT) participates in pyridoxal 5'-phosphate binding.

This sequence belongs to the class-V pyridoxal-phosphate-dependent aminotransferase family. SerC subfamily. In terms of assembly, homodimer. It depends on pyridoxal 5'-phosphate as a cofactor.

The protein localises to the cytoplasm. It carries out the reaction O-phospho-L-serine + 2-oxoglutarate = 3-phosphooxypyruvate + L-glutamate. The catalysed reaction is 4-(phosphooxy)-L-threonine + 2-oxoglutarate = (R)-3-hydroxy-2-oxo-4-phosphooxybutanoate + L-glutamate. It participates in amino-acid biosynthesis; L-serine biosynthesis; L-serine from 3-phospho-D-glycerate: step 2/3. Its pathway is cofactor biosynthesis; pyridoxine 5'-phosphate biosynthesis; pyridoxine 5'-phosphate from D-erythrose 4-phosphate: step 3/5. Its function is as follows. Catalyzes the reversible conversion of 3-phosphohydroxypyruvate to phosphoserine and of 3-hydroxy-2-oxo-4-phosphonooxybutanoate to phosphohydroxythreonine. The chain is Phosphoserine aminotransferase from Burkholderia orbicola (strain MC0-3).